The sequence spans 105 residues: Nitrogenase-stabilizing/protective protein NifW (105 aa).

This sequence belongs to the NifW family. As to quaternary structure, homotrimer; associates with NifD.

Its function is as follows. May protect the nitrogenase Fe-Mo protein from oxidative damage. In Nostoc punctiforme (strain ATCC 29133 / PCC 73102), this protein is Nitrogenase-stabilizing/protective protein NifW.